The chain runs to 478 residues: Pyruvate kinase (478 aa).

R35 is a substrate binding site. Positions 37, 39, and 69 each coordinate K(+). Residue N37–H40 coordinates ATP. Residues R76 and K157 each contribute to the ATP site. E219 serves as a coordination point for Mg(2+). Positions 242, 243, and 275 each coordinate substrate. Position 243 (D243) interacts with Mg(2+).

The protein belongs to the pyruvate kinase family. As to quaternary structure, homotetramer. Mg(2+) serves as cofactor. The cofactor is K(+).

It carries out the reaction pyruvate + ATP = phosphoenolpyruvate + ADP + H(+). The protein operates within carbohydrate degradation; glycolysis; pyruvate from D-glyceraldehyde 3-phosphate: step 5/5. This chain is Pyruvate kinase (pyk), found in Methylorubrum extorquens (strain ATCC 14718 / DSM 1338 / JCM 2805 / NCIMB 9133 / AM1) (Methylobacterium extorquens).